We begin with the raw amino-acid sequence, 381 residues long: Putative F-box protein At3g17500 (381 aa).

The region spanning 1 to 45 (MMSNLPLDLVEEILSRVPATSLKRLRSTCKSWNNCYKDQRFTEKH) is the F-box domain.

This Arabidopsis thaliana (Mouse-ear cress) protein is Putative F-box protein At3g17500.